A 98-amino-acid polypeptide reads, in one-letter code: Large ribosomal subunit protein uL23 (98 aa).

It belongs to the universal ribosomal protein uL23 family. In terms of assembly, part of the 50S ribosomal subunit. Contacts protein L29, and trigger factor when it is bound to the ribosome.

Its function is as follows. One of the early assembly proteins it binds 23S rRNA. One of the proteins that surrounds the polypeptide exit tunnel on the outside of the ribosome. Forms the main docking site for trigger factor binding to the ribosome. This Nitrobacter hamburgensis (strain DSM 10229 / NCIMB 13809 / X14) protein is Large ribosomal subunit protein uL23.